The chain runs to 356 residues: Homoserine O-acetyltransferase (356 aa).

The region spanning 49–337 (VLICHALTGS…KSTHGHDAFL (289 aa)) is the AB hydrolase-1 domain. S143 (nucleophile) is an active-site residue. R212 is a substrate binding site. Catalysis depends on residues D304 and H333. Residue D334 coordinates substrate.

It belongs to the AB hydrolase superfamily. MetX family. Homodimer.

It is found in the cytoplasm. The enzyme catalyses L-homoserine + acetyl-CoA = O-acetyl-L-homoserine + CoA. The protein operates within amino-acid biosynthesis; L-methionine biosynthesis via de novo pathway; O-acetyl-L-homoserine from L-homoserine: step 1/1. Functionally, transfers an acetyl group from acetyl-CoA to L-homoserine, forming acetyl-L-homoserine. The protein is Homoserine O-acetyltransferase of Nostoc punctiforme (strain ATCC 29133 / PCC 73102).